Here is a 184-residue protein sequence, read N- to C-terminus: Ras-related protein Rap-1A (184 aa).

GTP-binding positions include 10–18, 29–35, glycine 60, and 116–119; these read GSGGVGKSA, VEKYDPT, and NKCD. The short motif at 32 to 40 is the Effector region element; that stretch reads YDPTIEDSY. Cysteine 181 is modified (cysteine methyl ester). Cysteine 181 is lipidated: S-geranylgeranyl cysteine. Positions 182–184 are cleaved as a propeptide — removed in mature form; the sequence is LLL.

This sequence belongs to the small GTPase superfamily. Ras family. As to quaternary structure, found in a complex, at least composed of ITGB1BP1, KRIT1 and RAP1A. Interacts (active GTP-bound form preferentially) with KRIT1 (via C-terminus FERM domain); the interaction does not induce the opening conformation of KRIT1. Found in a complex composed of CDH1, RAP1A and PKP3; PKP3 acts as a scaffold protein within the complex, the complex is required for CDH1 localization to mature desmosome cell junctions. In its GTP-bound form interacts with PLCE1 and RADIL. Interacts with SGSM1, SGSM2 and SGSM3. Interacts (via GTP-bound active form) with RAPGEF2 (via Ras-associating domain). Interacts with TBC1D21. Interacts with RAP1GDS1.

It localises to the cell membrane. Its subcellular location is the cytoplasm. The protein resides in the perinuclear region. It is found in the cell junction. The protein localises to the early endosome. The catalysed reaction is GTP + H2O = GDP + phosphate + H(+). Activated by guanine nucleotide-exchange factors (GEF) EPAC and EPAC2 in a cAMP-dependent manner, and GFR. Functionally, counteracts the mitogenic function of Ras, at least partly because it can interact with Ras GAPs and RAF in a competitive manner. Together with ITGB1BP1, regulates KRIT1 localization to microtubules and membranes. Plays a role in nerve growth factor (NGF)-induced neurite outgrowth. Plays a role in the regulation of embryonic blood vessel formation. Involved in the establishment of basal endothelial barrier function. Facilitates the progressive accumulation of CDH1 at mature desmosome junctions via cAMP-dependent signaling and its interaction with PKP3. May be involved in the regulation of the vascular endothelial growth factor receptor KDR expression at endothelial cell-cell junctions. This Bos taurus (Bovine) protein is Ras-related protein Rap-1A (RAP1A).